The sequence spans 147 residues: Hemoglobin subunit beta (147 aa).

Val-2 is subject to N-acetylvaline. In terms of domain architecture, Globin spans His-3–His-147. Thr-13 carries the phosphothreonine modification. Ser-45 bears the Phosphoserine mark. Position 60 is an N6-acetyllysine (Lys-60). His-64 provides a ligand contact to heme b. Lys-83 carries the N6-acetyllysine modification. His-93 lines the heme b pocket. An S-nitrosocysteine modification is found at Cys-94. Lys-145 carries the post-translational modification N6-acetyllysine.

It belongs to the globin family. In terms of assembly, heterotetramer of two alpha chains and two beta chains. In terms of tissue distribution, red blood cells.

Functionally, involved in oxygen transport from the lung to the various peripheral tissues. The polypeptide is Hemoglobin subunit beta (HBB) (Gorilla gorilla gorilla (Western lowland gorilla)).